The sequence spans 143 residues: MGKPKGLCTARKLKTHRQEQRWNDKRYKKAHIGTRWKSNPFGGASHAKGIVLEKIGVEAKQPNSAIRKCVRVQLIKNGKKITAFVPNDGCLNFVEENDEVLVSGFGRSGHAVGDIPGVRFKIVKVANTSLIALFKGKKERPRS.

At Pro-62 the chain carries Hydroxyproline.

It belongs to the universal ribosomal protein uS12 family. In terms of assembly, component of the 40S small ribosomal subunit.

The protein localises to the cytoplasm. Its subcellular location is the cytosol. The protein resides in the rough endoplasmic reticulum. The chain is Small ribosomal subunit protein uS12 (rps-23) from Caenorhabditis elegans.